The chain runs to 698 residues: Potassium-transporting ATPase ATP-binding subunit (698 aa).

4 consecutive transmembrane segments (helical) span residues Ile56 to Leu76, Leu82 to Ala102, Thr240 to Thr260, and Ile271 to Ile291. The active-site 4-aspartylphosphate intermediate is Asp324. ATP is bound by residues Asp361, Glu365, Phe393–Ser400, and Lys412. Asp535 and Asp539 together coordinate Mg(2+). A run of 3 helical transmembrane segments spans residues Phe605–Met625, Ala633–Met653, and Gly677–Ile697.

It belongs to the cation transport ATPase (P-type) (TC 3.A.3) family. Type IA subfamily. As to quaternary structure, the system is composed of three essential subunits: KdpA, KdpB and KdpC.

It is found in the cell membrane. It catalyses the reaction K(+)(out) + ATP + H2O = K(+)(in) + ADP + phosphate + H(+). Part of the high-affinity ATP-driven potassium transport (or Kdp) system, which catalyzes the hydrolysis of ATP coupled with the electrogenic transport of potassium into the cytoplasm. This subunit is responsible for energy coupling to the transport system and for the release of the potassium ions to the cytoplasm. This chain is Potassium-transporting ATPase ATP-binding subunit, found in Bacillus cytotoxicus (strain DSM 22905 / CIP 110041 / 391-98 / NVH 391-98).